A 1196-amino-acid chain; its full sequence is DNA-directed RNA polymerase subunit beta (1196 aa).

Belongs to the RNA polymerase beta chain family. As to quaternary structure, the RNAP catalytic core consists of 2 alpha, 1 beta, 1 beta' and 1 omega subunit. When a sigma factor is associated with the core the holoenzyme is formed, which can initiate transcription.

The enzyme catalyses RNA(n) + a ribonucleoside 5'-triphosphate = RNA(n+1) + diphosphate. DNA-dependent RNA polymerase catalyzes the transcription of DNA into RNA using the four ribonucleoside triphosphates as substrates. In Lactococcus lactis subsp. lactis (strain IL1403) (Streptococcus lactis), this protein is DNA-directed RNA polymerase subunit beta.